A 274-amino-acid chain; its full sequence is Nitrogenase iron protein (274 aa).

8 to 15 contacts ATP; the sequence is GKGGIGKS. Cysteine 94 serves as a coordination point for [4Fe-4S] cluster. Arginine 97 carries the ADP-ribosylarginine; by dinitrogenase reductase ADP-ribosyltransferase modification. Cysteine 131 lines the [4Fe-4S] cluster pocket.

It belongs to the NifH/BchL/ChlL family. As to quaternary structure, homodimer. [4Fe-4S] cluster serves as cofactor. In terms of processing, the reversible ADP-ribosylation of Arg-97 inactivates the nitrogenase reductase and regulates nitrogenase activity.

It carries out the reaction N2 + 8 reduced [2Fe-2S]-[ferredoxin] + 16 ATP + 16 H2O = H2 + 8 oxidized [2Fe-2S]-[ferredoxin] + 2 NH4(+) + 16 ADP + 16 phosphate + 6 H(+). The key enzymatic reactions in nitrogen fixation are catalyzed by the nitrogenase complex, which has 2 components: the iron protein and the molybdenum-iron protein. This is Nitrogenase iron protein from Chlorobium phaeovibrioides (strain DSM 265 / 1930) (Prosthecochloris vibrioformis (strain DSM 265)).